We begin with the raw amino-acid sequence, 150 residues long: 15 kDa calcium-binding protein (150 aa).

At alanine 1 the chain carries N-acetylalanine. 4 EF-hand domains span residues 7–42 (TDAE…AGKS), 43–78 (FSEE…KMMK), 81–116 (WKKS…RIEP), and 118–150 (MSKE…IKSS). Aspartate 22, aspartate 24, serine 26, threonine 28, aspartate 56, aspartate 58, serine 60, threonine 62, glutamate 67, aspartate 94, aspartate 96, asparagine 98, glutamate 105, aspartate 131, aspartate 133, aspartate 135, lysine 137, and glutamate 142 together coordinate Ca(2+).

The protein localises to the nucleus. It is found in the cytoplasm. Its subcellular location is the cytoskeleton. The protein resides in the spindle. In terms of biological role, may play an important role in mitosis of sea urchin egg. May function as a Ca(2+)-dependent intracellular modulator of microtubule assembly. This chain is 15 kDa calcium-binding protein, found in Hemicentrotus pulcherrimus (Sea urchin).